We begin with the raw amino-acid sequence, 292 residues long: Elongation factor Ts (292 aa).

Residues 79 to 82 (TDFV) are involved in Mg(2+) ion dislocation from EF-Tu.

Belongs to the EF-Ts family.

The protein localises to the cytoplasm. In terms of biological role, associates with the EF-Tu.GDP complex and induces the exchange of GDP to GTP. It remains bound to the aminoacyl-tRNA.EF-Tu.GTP complex up to the GTP hydrolysis stage on the ribosome. This is Elongation factor Ts from Xanthomonas oryzae pv. oryzae (strain MAFF 311018).